Consider the following 48-residue polypeptide: ATP synthase protein 8 (48 aa).

Residues 13–32 (LVYGFALVTILLVLFAQYFL) form a helical membrane-spanning segment.

It belongs to the ATPase protein 8 family. In terms of assembly, F-type ATPases have 2 components, CF(1) - the catalytic core - and CF(0) - the membrane proton channel.

The protein localises to the mitochondrion membrane. In terms of biological role, mitochondrial membrane ATP synthase (F(1)F(0) ATP synthase or Complex V) produces ATP from ADP in the presence of a proton gradient across the membrane which is generated by electron transport complexes of the respiratory chain. F-type ATPases consist of two structural domains, F(1) - containing the extramembraneous catalytic core and F(0) - containing the membrane proton channel, linked together by a central stalk and a peripheral stalk. During catalysis, ATP synthesis in the catalytic domain of F(1) is coupled via a rotary mechanism of the central stalk subunits to proton translocation. Part of the complex F(0) domain. Minor subunit located with subunit a in the membrane. The chain is ATP synthase protein 8 (ATP8) from Kluyveromyces lactis (strain ATCC 8585 / CBS 2359 / DSM 70799 / NBRC 1267 / NRRL Y-1140 / WM37) (Yeast).